Here is a 106-residue protein sequence, read N- to C-terminus: Large ribosomal subunit protein eL36 (106 aa).

Positions 75 to 93 (VRQEKVGHSQESKEEERGD) are enriched in basic and acidic residues. Residues 75 to 106 (VRQEKVGHSQESKEEERGDVQCSPPDEGWWWY) form a disordered region.

This sequence belongs to the eukaryotic ribosomal protein eL36 family.

The sequence is that of Large ribosomal subunit protein eL36 (RPL36) from Daucus carota (Wild carrot).